Here is a 279-residue protein sequence, read N- to C-terminus: Cell division protein FtsQ (279 aa).

The disordered stretch occupies residues 1-28 (MTPMKKQLDKSLGSRRGATATRAKERAD). The Cytoplasmic portion of the chain corresponds to 1-48 (MTPMKKQLDKSLGSRRGATATRAKERADNRNTGPAAIVRLLAFIPWNR). A helical transmembrane segment spans residues 49-69 (VLLHVSIFCFWLLVLSALIAG). Residues 70 to 279 (VKWLDRPVAT…WKADVTPEQG (210 aa)) are Periplasmic-facing. A POTRA domain is found at 75–144 (RPVATVQVVG…DAVQVDLEEE (70 aa)).

It belongs to the FtsQ/DivIB family. FtsQ subfamily. As to quaternary structure, part of a complex composed of FtsB, FtsL and FtsQ.

The protein localises to the cell inner membrane. In terms of biological role, essential cell division protein. May link together the upstream cell division proteins, which are predominantly cytoplasmic, with the downstream cell division proteins, which are predominantly periplasmic. May control correct divisome assembly. The polypeptide is Cell division protein FtsQ (Hahella chejuensis (strain KCTC 2396)).